Here is a 226-residue protein sequence, read N- to C-terminus: uncharacterized protein (226 aa).

Residues 121-163 are a coiled coil; sequence TVDELIKTIEKELNKVKKSRKNREKKTNEVEEIIEELIEEDDI.

This is an uncharacterized protein from Methanocaldococcus jannaschii (strain ATCC 43067 / DSM 2661 / JAL-1 / JCM 10045 / NBRC 100440) (Methanococcus jannaschii).